An 89-amino-acid chain; its full sequence is Small ribosomal subunit protein uS15 (89 aa).

This sequence belongs to the universal ribosomal protein uS15 family. Part of the 30S ribosomal subunit. Forms a bridge to the 50S subunit in the 70S ribosome, contacting the 23S rRNA.

Functionally, one of the primary rRNA binding proteins, it binds directly to 16S rRNA where it helps nucleate assembly of the platform of the 30S subunit by binding and bridging several RNA helices of the 16S rRNA. In terms of biological role, forms an intersubunit bridge (bridge B4) with the 23S rRNA of the 50S subunit in the ribosome. This is Small ribosomal subunit protein uS15 from Coxiella burnetii (strain CbuK_Q154) (Coxiella burnetii (strain Q154)).